We begin with the raw amino-acid sequence, 522 residues long: Amphoterin-induced protein 2 (522 aa).

Residues 1 to 39 (MSLRVHTLPTLLGAVVRPGCRELLCLLMITVTVGPGASG) form the signal peptide. The LRRNT domain occupies 40 to 68 (VCPTACICATDIVSCTNKNLSKVPGNLFR). The Extracellular segment spans residues 40 to 398 (VCPTACICAT…RSHAHEAFNT (359 aa)). Intrachain disulfides connect cysteine 41–cysteine 47 and cysteine 45–cysteine 54. N-linked (GlcNAc...) asparagine glycosylation occurs at asparagine 58. LRR repeat units lie at residues 69-90 (LIKRLDLSYNRIGLLDSEWIPV), 94-115 (KLNTLILRHNNITSISTGSFST), 118-139 (NLKCLDLSSNKLKTVKNAVFQE), 142-163 (VLEVLLLYNNHISYLDPSAFGG), 166-187 (QLQKLYLSGNFLTQFPMDLYVG), and 193-214 (ELMFLDVSYNRIPSMPMHHINL). Asparagine 104 is a glycosylation site (N-linked (GlcNAc...) asparagine). The region spanning 228–284 (NPFVCDCSLYSLLVFWYRRHFSSVMDFKNDYTCRLWSDSRHSRQVLLLQDSFMNCSD) is the LRRCT domain. 2 cysteine pairs are disulfide-bonded: cysteine 232–cysteine 260 and cysteine 234–cysteine 282. N-linked (GlcNAc...) asparagine glycosylation is found at asparagine 281, asparagine 288, asparagine 345, asparagine 373, asparagine 381, and asparagine 384. The region spanning 289–379 (GSFRALGFIH…RLLNETVDVT (91 aa)) is the Ig-like C2-type domain. An intrachain disulfide couples cysteine 310 to cysteine 363. The chain crosses the membrane as a helical span at residues 399–419 (AFTTLAACVASIVLVLLYLYL). The Cytoplasmic segment spans residues 420-522 (TPCPCKCKTK…FSDTPFVAST (103 aa)). The segment at 501 to 522 (RGKSDSDSVNSVFSDTPFVAST) is disordered.

The protein belongs to the immunoglobulin superfamily. AMIGO family. In terms of assembly, binds itself as well as AMIGO1 and AMIGO3. Highest levels in breast, ovary, cervix, and uterus. Lower levels in lung, colon, and rectum. Differentially expressed in 56% of thyroid, 57% of pancreatic and 45% of stomach cancers.

It localises to the cell membrane. The protein resides in the nucleus. In terms of biological role, required for depolarization-dependent survival of cultured cerebellar granule neurons. May mediate homophilic as well as heterophilic cell-cell interaction with AMIGO1 or AMIGO3. May contribute to signal transduction through its intracellular domain. May be required for tumorigenesis of a subset of gastric adenocarcinomas. This chain is Amphoterin-induced protein 2, found in Homo sapiens (Human).